The chain runs to 512 residues: MGELTEFQKKRLENIKRNNDLLKKLNLNNVSSQIKREAGVEDEHLDRKRKKKAGSAKKAVKKEPKPAAIPTRRSRRLRGENVDGNGIPNVNDNQLLKMGQSDSTPELEAIDELKNTALSGDVKLSDLIKSENEEELLDKFKSFANKNFSSGDFFKELQQQQVPTPEIKQLQEDFDLKLYDIFQPNEIKLTAERISATFFHPSVDKKLVICGDTAGNVGLWNVRETQPEDELEEPDITKVKLFTKNVGRIDTYATDSSRLLAASYDGYLRSINLQDMNSEEILVLKNEYDDPLGISDFQFNYNDPNVLFMTTLSGEFTTFDVRTKPTEINLKRLSDKKIGSFSINPKRPYEIATGSLDRTLKIWDTRKIVNKPEWSQYEDFASHEIVATYDSRLSVSAVSYSPMDETLVCNGYDDTIRLFDVSGTLPEDLQPKLTLKHNCQTGRWTSILKARFKLNMDVFAIANMKRAIDIYTSSGVQLAHLPTATVPAVISWHPTQNWVVGGNSSGKAFLFT.

The segment at 32–96 (SQIKREAGVE…IPNVNDNQLL (65 aa)) is disordered. Over residues 34 to 46 (IKREAGVEDEHLD) the composition is skewed to basic and acidic residues. The span at 47 to 60 (RKRKKKAGSAKKAV) shows a compositional bias: basic residues. WD repeat units follow at residues 189–230 (LTAE…PEDE), 241–281 (LFTK…SEEI), 289–329 (DDPL…TEIN), 333–373 (LSDK…NKPE), 390–429 (DSRL…PEDL), 442–481 (GRWT…LAHL), and 482–512 (PTAT…FLFT).

The protein belongs to the WD repeat DDB2/WDR76 family.

Functionally, DNA-binding protein that binds to both single- and double-stranded DNA. Binds preferentially to UV-damaged DNA. May be involved in DNA-metabolic processes. In Kluyveromyces lactis (strain ATCC 8585 / CBS 2359 / DSM 70799 / NBRC 1267 / NRRL Y-1140 / WM37) (Yeast), this protein is DNA damage-binding protein CMR1.